The following is a 669-amino-acid chain: Cysteine-rich receptor-like protein kinase 34 (669 aa).

The first 23 residues, 1-23 (MKLKISFLPTFLIFLISLDSVTA), serve as a signal peptide directing secretion. Gnk2-homologous domains lie at 24-123 (QEIC…NVSF) and 133-246 (ETLY…LYPY). Over 24 to 285 (QEICFSGFFK…SDRANTTIKG (262 aa)) the chain is Extracellular. 8 N-linked (GlcNAc...) asparagine glycosylation sites follow: asparagine 35, asparagine 52, asparagine 103, asparagine 120, asparagine 147, asparagine 172, asparagine 252, and asparagine 280. A helical membrane pass occupies residues 286–306 (IIVAIVVPIIVILVSLVVLLV). Residues 307-669 (VCRRKKSYKT…DASITEFYPR (363 aa)) are Cytoplasmic-facing. One can recognise a Protein kinase domain in the interval 345-624 (FSDSNMIGRG…MMLTSSTTTL (280 aa)). Residues 351–359 (IGRGGFGEV) and lysine 373 contribute to the ATP site. Residue tyrosine 418 is modified to Phosphotyrosine. Catalysis depends on aspartate 470, which acts as the Proton acceptor. The residue at position 474 (serine 474) is a Phosphoserine. Threonine 510 is subject to Phosphothreonine. Residue tyrosine 518 is modified to Phosphotyrosine.

This sequence belongs to the protein kinase superfamily. Ser/Thr protein kinase family. CRK subfamily.

The protein resides in the membrane. The enzyme catalyses L-seryl-[protein] + ATP = O-phospho-L-seryl-[protein] + ADP + H(+). It catalyses the reaction L-threonyl-[protein] + ATP = O-phospho-L-threonyl-[protein] + ADP + H(+). The protein is Cysteine-rich receptor-like protein kinase 34 of Arabidopsis thaliana (Mouse-ear cress).